We begin with the raw amino-acid sequence, 361 residues long: 3-galactosyl-N-acetylglucosaminide 4-alpha-L-fucosyltransferase FUT3 (361 aa).

The Cytoplasmic segment spans residues 1 to 15 (MDPLGAAKPQWPWRR). The helical; Signal-anchor for type II membrane protein transmembrane segment at 16–34 (CLAALLFQLLVAVCFFSYL) threads the bilayer. At 35–361 (RVSRDDATGS…TVRSIAAWFT (327 aa)) the chain is on the lumenal side. Positions 39 to 58 (DDATGSPRAPSGSSRQDTTP) are disordered. Residues N154 and N185 are each glycosylated (N-linked (GlcNAc...) asparagine).

It belongs to the glycosyltransferase 10 family. Glycosylated. As to expression, highly expressed in stomach, colon, small intestine, lung and kidney and to a lesser extent in salivary gland, bladder, uterus and liver.

The protein localises to the golgi apparatus. It is found in the golgi stack membrane. The catalysed reaction is a beta-D-galactosyl-(1-&gt;3)-N-acetyl-beta-D-glucosaminyl derivative + GDP-beta-L-fucose = a beta-D-galactosyl-(1-&gt;3)-[alpha-L-fucosyl-(1-&gt;4)]-N-acetyl-beta-D-glucosaminyl derivative + GDP + H(+). It carries out the reaction an N-acetyl-alpha-neuraminyl-(2-&gt;3)-beta-D-galactosyl-(1-&gt;4)-N-acetyl-beta-D-glucosaminyl derivative + GDP-beta-L-fucose = an alpha-Neu5Ac-(2-&gt;3)-beta-D-Gal-(1-&gt;4)-[alpha-L-Fuc-(1-&gt;3)]-beta-D-GlcNAc derivative + GDP + H(+). The enzyme catalyses a beta-D-galactosyl-(1-&gt;4)-N-acetyl-beta-D-glucosaminyl derivative + GDP-beta-L-fucose = a beta-D-galactosyl-(1-&gt;4)-[alpha-L-fucosyl-(1-&gt;3)]-N-acetyl-beta-D-glucosaminyl derivative + GDP + H(+). It catalyses the reaction an alpha-Neu5Ac-(2-&gt;3)-beta-D-Gal-(1-&gt;4)-beta-D-GlcNAc-(1-&gt;3)-beta-D-Gal-(1-&gt;4)-[alpha-L-Fuc-(1-&gt;3)]-beta-D-GlcNAc derivative + GDP-beta-L-fucose = an alpha-Neu5Ac-(2-&gt;3)-beta-D-Gal-(1-&gt;4)-[alpha-L-Fuc-(1-&gt;3)]-beta-D-GlcNAc-(1-&gt;3)-beta-D-Gal-(1-&gt;4)-[alpha-L-Fuc-(1-&gt;3)]-beta-D-GlcNAc derivative + GDP + H(+). The catalysed reaction is Lc4Cer + GDP-beta-L-fucose = a lactoside III(4)-a-Fuc-Lc4Cer + GDP + H(+). It carries out the reaction a beta-D-Gal-(1-&gt;3)-beta-D-GlcNAc-(1-&gt;3)-beta-D-Gal-(1-&gt;4)-beta-D-Glc-(1&lt;-&gt;1')-Cer(d18:1(4E)) + GDP-beta-L-fucose = a III(4)-a-Fuc-Lc4Cer(d18:1(4E)) + GDP + H(+). The enzyme catalyses N-acetyl-alpha-neuraminosyl-(2-&gt;3)-beta-D-galactosyl-(1-&gt;3)-[N-acetyl-alpha-neuraminosyl-(2-&gt;6)]-N-acetyl-beta-D-glucosaminyl-(1-&gt;3)-beta-D-galactosyl-(1-&gt;4)-beta-D-glucosyl-(1&lt;-&gt;1')-N-acyl-sphing-4-enine + GDP-beta-L-fucose = N-acetyl-alpha-neuraminosyl-(2-&gt;3)-beta-D-galactosyl-(1-&gt;3)-alpha-L-fucosyl-(1-&gt;4)-[N-acetyl-alpha-neuraminosyl-(2-&gt;6)-N-acetyl-beta-D-glucosaminyl-(1-&gt;3)]-beta-D-galactosyl-(1-&gt;4)-beta-D-glucosyl-(1&lt;-&gt;1')-N-acyl-sphing-4-enine + GDP + H(+). It catalyses the reaction N-acetyl-alpha-neuraminosyl-(2-&gt;3)-beta-D-galactosyl-(1-&gt;3)-N-acetyl-beta-D-glucosaminyl-(1-&gt;3)-beta-D-galactosyl-(1-&gt;4)-beta-D-glucosyl-(1&lt;-&gt;1')-N-acyl-sphing-4-enine + GDP-beta-L-fucose = N-acetyl-alpha-neuraminosyl-(2-&gt;3)-beta-D-galactosyl-(1-&gt;3)-alpha-L-fucosyl-(1-&gt;4)-[N-acetyl-beta-D-glucosaminyl-(1-&gt;3)]-beta-D-galactosyl-(1-&gt;4)-beta-D-glucosyl-(1&lt;-&gt;1')-N-acyl-sphing-4-enine + GDP + H(+). The catalysed reaction is beta-D-galactosyl-(1-&gt;3)-N-acetyl-D-glucosamine + GDP-beta-L-fucose = beta-D-galactosyl-(1-&gt;3)-[alpha-L-fucosyl-(1-&gt;4)]-N-acetyl-D-glucosamine + GDP + H(+). It carries out the reaction alpha-L-Fuc-(1-&gt;2)-beta-D-Gal-(1-&gt;3)-D-GlcNAc + GDP-beta-L-fucose = alpha-L-Fuc-(1-&gt;2)-beta-D-Gal-(1-&gt;3)-[alpha-L-Fuc-(1-&gt;4)]-D-GlcNAc + GDP + H(+). The enzyme catalyses alpha-L-Fuc-(1-&gt;2)-beta-D-Gal-(1-&gt;4)-D-GlcNAc + GDP-beta-L-fucose = alpha-L-Fuc-(1-&gt;2)-beta-D-Gal-(1-&gt;4)-[alpha-L-Fuc-(1-&gt;3)]-D-GlcNAc + GDP + H(+). It catalyses the reaction beta-D-galactosyl-(1-&gt;4)-N-acetyl-D-glucosamine + GDP-beta-L-fucose = beta-D-galactosyl-(1-&gt;4)-[alpha-L-fucosyl-(1-&gt;3)]-N-acetyl-D-glucosamine + GDP + H(+). The catalysed reaction is lactose + GDP-beta-L-fucose = beta-D-galactosyl-(1-&gt;4)-[alpha-L-fucosyl-(1-&gt;3)]-D-glucose + GDP + H(+). It carries out the reaction an alpha-Neu5Ac-(2-&gt;3)-beta-D-Gal-(1-&gt;3)-D-GlcNAc derivative + GDP-beta-L-fucose = an alpha-Neu5Ac-(2-&gt;3)-beta-D-Gal-(1-&gt;3)-[alpha-L-Fuc-(1-&gt;4)]-beta-D-GlcNAc derivative + GDP + H(+). It participates in protein modification; protein glycosylation. Its function is as follows. Catalyzes the transfer of L-fucose, from a guanosine diphosphate-beta-L-fucose, to both the subterminal N-acetyl glucosamine (GlcNAc) of type 1 chain (beta-D-Gal-(1-&gt;3)-beta-D-GlcNAc) glycolipids and oligosaccharides via an alpha(1,4) linkage, and the subterminal glucose (Glc) or GlcNAc of type 2 chain (beta-D-Gal-(1-&gt;4)-beta-D-GlcNAc) oligosaccharides via an alpha(1,3) linkage, independently of the presence of terminal alpha-L-fucosyl-(1,2) moieties on the terminal galactose of these acceptors. Through its catalytic activity, participates in the synthesis of antigens of the Lewis blood group system, i.e. Lewis a (Le(a)), lewis b (Le(b)), Lewis x/SSEA-1 (Le(x)) and lewis y (Le(y)) antigens. Also catalyzes the transfer of L-fucose to subterminal GlcNAc of sialyl- and disialyl-lactotetraosylceramide to produce sialyl Lewis a (sLe(a)) and disialyl Lewis a via an alpha(1,4) linkage and therefore may regulate cell surface sLe(a) expression and consequently regulates adhesive properties to E-selectin, cell proliferation and migration. Catalyzes the transfer of an L-fucose to 3'-sialyl-N-acetyllactosamine by an alpha(1,3) linkage, which allows the formation of sialyl-Lewis x structure and therefore may regulate the sialyl-Lewis x surface antigen expression and consequently adhesive properties to E-selectin. Prefers type 1 chain over type 2 acceptors. Type 1 tetrasaccharide is a better acceptor than type 1 disaccharide suggesting that a beta anomeric configuration of GlcNAc in the substrate is preferred. Lewis-positive (Le(+)) individuals have an active enzyme while Lewis-negative (Le(-)) individuals have an inactive enzyme. In Homo sapiens (Human), this protein is 3-galactosyl-N-acetylglucosaminide 4-alpha-L-fucosyltransferase FUT3.